The primary structure comprises 274 residues: Putative phosphoenolpyruvate synthase regulatory protein (274 aa).

Gly-154 to Thr-161 lines the ADP pocket.

It belongs to the pyruvate, phosphate/water dikinase regulatory protein family. PSRP subfamily.

The catalysed reaction is [pyruvate, water dikinase] + ADP = [pyruvate, water dikinase]-phosphate + AMP + H(+). It catalyses the reaction [pyruvate, water dikinase]-phosphate + phosphate + H(+) = [pyruvate, water dikinase] + diphosphate. Bifunctional serine/threonine kinase and phosphorylase involved in the regulation of the phosphoenolpyruvate synthase (PEPS) by catalyzing its phosphorylation/dephosphorylation. This Pseudomonas aeruginosa (strain LESB58) protein is Putative phosphoenolpyruvate synthase regulatory protein.